A 374-amino-acid polypeptide reads, in one-letter code: DNA-directed RNA polymerase subunit alpha (374 aa).

Residues 1–270 (MIFDEDSSSV…DQFQQFINFD (270 aa)) form an alpha N-terminal domain (alpha-NTD) region. Residues 282–374 (KDVLPYDSNL…ESLSKQYSEE (93 aa)) are alpha C-terminal domain (alpha-CTD).

The protein belongs to the RNA polymerase alpha chain family. In terms of assembly, homodimer. The RNAP catalytic core consists of 2 alpha, 1 beta, 1 beta' and 1 omega subunit. When a sigma factor is associated with the core the holoenzyme is formed, which can initiate transcription.

The catalysed reaction is RNA(n) + a ribonucleoside 5'-triphosphate = RNA(n+1) + diphosphate. In terms of biological role, DNA-dependent RNA polymerase catalyzes the transcription of DNA into RNA using the four ribonucleoside triphosphates as substrates. The polypeptide is DNA-directed RNA polymerase subunit alpha (Ehrlichia ruminantium (strain Gardel)).